The sequence spans 197 residues: Inner membrane protein RclC (197 aa).

The Periplasmic portion of the chain corresponds to Met1 to Gly15. The chain crosses the membrane as a helical span at residues Leu16 to Val36. At Pro37–Asn85 the chain is on the cytoplasmic side. A helical membrane pass occupies residues Thr86–Ala106. The Periplasmic portion of the chain corresponds to Asn107 to Trp112. Residues Leu113 to Ile133 traverse the membrane as a helical segment. The Cytoplasmic portion of the chain corresponds to Thr134–Tyr197.

Its subcellular location is the cell inner membrane. Its function is as follows. Probably involved in reactive chlorine species (RCS) stress resistance. This Escherichia coli (strain K12) protein is Inner membrane protein RclC (rclC).